The chain runs to 177 residues: Peptide methionine sulfoxide reductase MsrA (177 aa).

Cys15 is an active-site residue.

The protein belongs to the MsrA Met sulfoxide reductase family.

The catalysed reaction is L-methionyl-[protein] + [thioredoxin]-disulfide + H2O = L-methionyl-(S)-S-oxide-[protein] + [thioredoxin]-dithiol. The enzyme catalyses [thioredoxin]-disulfide + L-methionine + H2O = L-methionine (S)-S-oxide + [thioredoxin]-dithiol. Its function is as follows. Has an important function as a repair enzyme for proteins that have been inactivated by oxidation. Catalyzes the reversible oxidation-reduction of methionine sulfoxide in proteins to methionine. The polypeptide is Peptide methionine sulfoxide reductase MsrA (Listeria innocua serovar 6a (strain ATCC BAA-680 / CLIP 11262)).